The sequence spans 488 residues: Probable Xaa-Pro aminopeptidase ATEG_00858 (488 aa).

Residues D273, D284, E417, and E456 each contribute to the Mn(2+) site.

This sequence belongs to the peptidase M24B family. It depends on Mn(2+) as a cofactor.

It catalyses the reaction Release of any N-terminal amino acid, including proline, that is linked to proline, even from a dipeptide or tripeptide.. In terms of biological role, catalyzes the removal of a penultimate prolyl residue from the N-termini of peptides. In Aspergillus terreus (strain NIH 2624 / FGSC A1156), this protein is Probable Xaa-Pro aminopeptidase ATEG_00858.